The chain runs to 156 residues: LIM domain only protein 3 (156 aa).

LIM zinc-binding domains follow at residues 22–84 and 86–148; these read KGCA…LFGV and GNCA…GLMK.

This Xenopus laevis (African clawed frog) protein is LIM domain only protein 3.